A 77-amino-acid polypeptide reads, in one-letter code: Conotoxin Mr8.2 (77 aa).

A signal peptide spans 1-16 (MLRLITAAVLVSACLA). The propeptide occupies 17–32 (YPQKKRTPPQTRPTSR).

The protein belongs to the conotoxin B2 family. Post-translationally, contains 5 disulfide bonds. Expressed by the venom duct.

The protein localises to the secreted. The protein is Conotoxin Mr8.2 of Conus marmoreus (Marble cone).